Here is a 157-residue protein sequence, read N- to C-terminus: Transmembrane protein 42 (157 aa).

The next 4 membrane-spanning stretches (helical) occupy residues 37–57 (FWGV…AAAA), 67–87 (IGLC…MWTF), 100–120 (IASV…GYLL), and 124–144 (CQEI…TLIH).

It localises to the membrane. The chain is Transmembrane protein 42 (Tmem42) from Mus musculus (Mouse).